Here is a 187-residue protein sequence, read N- to C-terminus: Ribosome-recycling factor (187 aa).

It belongs to the RRF family.

The protein localises to the cytoplasm. Functionally, responsible for the release of ribosomes from messenger RNA at the termination of protein biosynthesis. May increase the efficiency of translation by recycling ribosomes from one round of translation to another. The polypeptide is Ribosome-recycling factor (Paracoccus zeaxanthinifaciens).